The following is a 564-amino-acid chain: 3beta-hydroxysteroid-dehydrogenase/decarboxylase isoform 2 (564 aa).

16–21 (GGRGFA) is an NAD(+) binding site. Residues asparagine 146 and asparagine 158 are each glycosylated (N-linked (GlcNAc...) asparagine). NAD(+)-binding residues include tyrosine 161 and lysine 165. Lysine 165 serves as the catalytic Proton donor. A Reticulon domain is found at 384–564 (VADTLLWKDL…EKLFGSKKHD (181 aa)). 2 helical membrane-spanning segments follow: residues 398-418 (IAIF…STVV) and 424-444 (ALLV…KIFG). An N-linked (GlcNAc...) asparagine glycan is attached at asparagine 474. 2 helical membrane passes run 486–506 (GNDW…SLAG) and 507–527 (AISL…AFLV).

It belongs to the 3-beta-HSD family.

The protein resides in the endoplasmic reticulum membrane. It carries out the reaction a 3beta-hydroxysteroid-4alpha-carboxylate + NAD(+) = a 3-oxosteroid + CO2 + NADH. The enzyme catalyses 4alpha-carboxy-4beta,14alpha-dimethyl-9beta,19-cyclo-5alpha-ergost-24(24(1))-en-3beta-ol + NAD(+) = cycloeucalenone + CO2 + NADH. It functions in the pathway steroid biosynthesis; zymosterol biosynthesis; zymosterol from lanosterol: step 4/6. In terms of biological role, 3beta-hydroxysteroid-dehydrogenase/decarboxylase involved in sterol synthesis. Catalyzes the formation of 3-oxosteroids from 3beta-hydroxysteroids-4alpha-carboxylate. Involved in the regulation of inflorescence internodes and leaves growth, probably by affecting auxin transporter activity possibly by altering sterol composition in the membranes. The protein is 3beta-hydroxysteroid-dehydrogenase/decarboxylase isoform 2 of Arabidopsis thaliana (Mouse-ear cress).